Reading from the N-terminus, the 295-residue chain is Mycothiol acetyltransferase (295 aa).

N-acetyltransferase domains follow at residues 5–141 (VEIR…TPLP) and 149–295 (VRLR…MYRR). E35 provides a ligand contact to 1D-myo-inositol 2-(L-cysteinylamino)-2-deoxy-alpha-D-glucopyranoside. 76-78 (LVV) is a binding site for acetyl-CoA. Positions 176, 215, and 229 each coordinate 1D-myo-inositol 2-(L-cysteinylamino)-2-deoxy-alpha-D-glucopyranoside. Residues 233-235 (VGV) and 240-246 (RGTGLGR) contribute to the acetyl-CoA site. Y267 serves as a coordination point for 1D-myo-inositol 2-(L-cysteinylamino)-2-deoxy-alpha-D-glucopyranoside. 272-277 (NTAAVR) contributes to the acetyl-CoA binding site.

The protein belongs to the acetyltransferase family. MshD subfamily. Monomer.

The catalysed reaction is 1D-myo-inositol 2-(L-cysteinylamino)-2-deoxy-alpha-D-glucopyranoside + acetyl-CoA = mycothiol + CoA + H(+). Catalyzes the transfer of acetyl from acetyl-CoA to desacetylmycothiol (Cys-GlcN-Ins) to form mycothiol. The polypeptide is Mycothiol acetyltransferase (Thermobispora bispora (strain ATCC 19993 / DSM 43833 / CBS 139.67 / JCM 10125 / KCTC 9307 / NBRC 14880 / R51)).